Reading from the N-terminus, the 60-residue chain is Snake venom metalloproteinase bothrojaractivase (60 aa).

The Peptidase M12B domain maps to 1-60 (RYIELAVVADHGMFTKYRVHELVNTVNGFFRSKQDLIKVQKDKTLTSFGEWRERDLLPRI). Residue Glu-4 participates in Ca(2+) binding.

This sequence belongs to the venom metalloproteinase (M12B) family. P-I subfamily. As to quaternary structure, monomer. Requires Zn(2+) as cofactor. As to expression, expressed by the venom gland.

It is found in the secreted. With respect to regulation, completely inhibited by EDTA and EGTA. Partially inhibited by serine proteinase inhibitors PMSF and benzamidine. Not inhibited by cysteine proteinase inhibitors mercury ions and E-64. Is active without cofactors, although the presence of low concentrations of calcium and zinc ions enhanced its ability to convert prothrombin (F2) into active thrombin. In terms of biological role, prothrombin (F2) activator that is cofactor-independent. Also has fibrinolytic and fibrinogenolytic activity. It degrades the Aalpha-chain and more slowly the Bbeta-chain of fibrin and fibrinogen, while the gamma-chain is only partially and slowly affected. A dose-dependent procoagulant activity is shown in human plasma. The chain is Snake venom metalloproteinase bothrojaractivase from Bothrops jararaca (Jararaca).